Consider the following 224-residue polypeptide: tRNA (guanine-N(7)-)-methyltransferase (224 aa).

Positions 56, 81, 108, and 131 each coordinate S-adenosyl-L-methionine. Residue Asp131 is part of the active site. Substrate contacts are provided by residues Lys135, Asp167, and 202 to 205 (TKFE).

The protein belongs to the class I-like SAM-binding methyltransferase superfamily. TrmB family.

The enzyme catalyses guanosine(46) in tRNA + S-adenosyl-L-methionine = N(7)-methylguanosine(46) in tRNA + S-adenosyl-L-homocysteine. Its pathway is tRNA modification; N(7)-methylguanine-tRNA biosynthesis. Catalyzes the formation of N(7)-methylguanine at position 46 (m7G46) in tRNA. This chain is tRNA (guanine-N(7)-)-methyltransferase, found in Nitrosomonas europaea (strain ATCC 19718 / CIP 103999 / KCTC 2705 / NBRC 14298).